Consider the following 304-residue polypeptide: Fluoroacetate dehalogenase (304 aa).

Residues 26–151 (PALLLLHGFP…FVARAYWHWY (126 aa)) enclose the AB hydrolase-1 domain. The active-site Nucleophile is the D104. Positions 105, 108, 149, 150, and 212 each coordinate fluoroacetate. The active-site Proton acceptor is the H271.

This sequence belongs to the AB hydrolase superfamily. Epoxide hydrolase family. In terms of assembly, homodimer.

The catalysed reaction is a haloacetate + H2O = a halide anion + glycolate + H(+). The enzyme catalyses fluoroacetate + H2O = fluoride + glycolate + H(+). Functionally, catalyzes the hydrolytic defluorination of fluoroacetate to produce glycolate. Has only very low activity towards chloroacetate and bromoacetate. The chain is Fluoroacetate dehalogenase (fac-dex) from Burkholderia sp.